Reading from the N-terminus, the 78-residue chain is Translation initiation factor IF-1 (78 aa).

The S1-like domain maps to 1 to 72 (MAKEAEMEFE…TRGRITYRKI (72 aa)).

The protein belongs to the IF-1 family. In terms of assembly, component of the 30S ribosomal translation pre-initiation complex which assembles on the 30S ribosome in the order IF-2 and IF-3, IF-1 and N-formylmethionyl-tRNA(fMet); mRNA recruitment can occur at any time during PIC assembly.

Its subcellular location is the cytoplasm. One of the essential components for the initiation of protein synthesis. Stabilizes the binding of IF-2 and IF-3 on the 30S subunit to which N-formylmethionyl-tRNA(fMet) subsequently binds. Helps modulate mRNA selection, yielding the 30S pre-initiation complex (PIC). Upon addition of the 50S ribosomal subunit IF-1, IF-2 and IF-3 are released leaving the mature 70S translation initiation complex. The sequence is that of Translation initiation factor IF-1 from Mesoplasma florum (strain ATCC 33453 / NBRC 100688 / NCTC 11704 / L1) (Acholeplasma florum).